The sequence spans 314 residues: Probable 5-dehydro-4-deoxyglucarate dehydratase (314 aa).

The protein belongs to the DapA family.

It catalyses the reaction 5-dehydro-4-deoxy-D-glucarate + H(+) = 2,5-dioxopentanoate + CO2 + H2O. It participates in carbohydrate acid metabolism; D-glucarate degradation; 2,5-dioxopentanoate from D-glucarate: step 2/2. The chain is Probable 5-dehydro-4-deoxyglucarate dehydratase from Bradyrhizobium sp. (strain ORS 278).